The following is a 285-amino-acid chain: uncharacterized protein (285 aa).

Residues 197-217 (PTIGALLSLVSAFFSFIPFLM) form a helical membrane-spanning segment.

It localises to the membrane. This is an uncharacterized protein from Saccharomyces cerevisiae (strain ATCC 204508 / S288c) (Baker's yeast).